Consider the following 124-residue polypeptide: Small ribosomal subunit protein uS12 (124 aa).

The residue at position 89 (Asp89) is a 3-methylthioaspartic acid.

It belongs to the universal ribosomal protein uS12 family. As to quaternary structure, part of the 30S ribosomal subunit. Contacts proteins S8 and S17. May interact with IF1 in the 30S initiation complex.

In terms of biological role, with S4 and S5 plays an important role in translational accuracy. Functionally, interacts with and stabilizes bases of the 16S rRNA that are involved in tRNA selection in the A site and with the mRNA backbone. Located at the interface of the 30S and 50S subunits, it traverses the body of the 30S subunit contacting proteins on the other side and probably holding the rRNA structure together. The combined cluster of proteins S8, S12 and S17 appears to hold together the shoulder and platform of the 30S subunit. The polypeptide is Small ribosomal subunit protein uS12 (Shewanella putrefaciens (strain CN-32 / ATCC BAA-453)).